The chain runs to 279 residues: Ribose-phosphate pyrophosphokinase (279 aa).

ATP contacts are provided by residues 31–33 (DGE) and 88–89 (RQ). Mg(2+) is bound by residues His121 and Asp159. Lys182 is a catalytic residue. D-ribose 5-phosphate contacts are provided by residues Arg184, Asp208, and 212 to 216 (STGGT).

This sequence belongs to the ribose-phosphate pyrophosphokinase family. Class III (archaeal) subfamily. The cofactor is Mg(2+).

Its subcellular location is the cytoplasm. The enzyme catalyses D-ribose 5-phosphate + ATP = 5-phospho-alpha-D-ribose 1-diphosphate + AMP + H(+). Its pathway is metabolic intermediate biosynthesis; 5-phospho-alpha-D-ribose 1-diphosphate biosynthesis; 5-phospho-alpha-D-ribose 1-diphosphate from D-ribose 5-phosphate (route I): step 1/1. Functionally, involved in the biosynthesis of the central metabolite phospho-alpha-D-ribosyl-1-pyrophosphate (PRPP) via the transfer of pyrophosphoryl group from ATP to 1-hydroxyl of ribose-5-phosphate (Rib-5-P). The polypeptide is Ribose-phosphate pyrophosphokinase (Pyrococcus furiosus (strain ATCC 43587 / DSM 3638 / JCM 8422 / Vc1)).